The chain runs to 310 residues: MTAQKIRIATRHSPLAMWQANFIKSELLKYHPNLIVELLPMKTKGDIILDTPLAKVGGKGLFVKELEVAILEGRADIAVHSIKDVPVDFPEGLGLTTICKREDPHDAFVSNHYKQLDELPEGAIVGTCSLRRQCQILALRPDIIIKNLRGNVNTRLRKLDEGEYDAIILAAAGLMRLEMQHRITSLIAPEVSLPAVGQGAVGIECRLDDEQTITLLKPLEDPETRIRITAERAMNLKLQGGCQVPIGSFAILENEQLFLRGLVGSVDGKQIIRKEITGHQNDAQQLGITLAEQLLACGAEEILAEVYKNQ.

The residue at position 242 (cysteine 242) is an S-(dipyrrolylmethanemethyl)cysteine.

The protein belongs to the HMBS family. In terms of assembly, monomer. The cofactor is dipyrromethane.

It carries out the reaction 4 porphobilinogen + H2O = hydroxymethylbilane + 4 NH4(+). It participates in porphyrin-containing compound metabolism; protoporphyrin-IX biosynthesis; coproporphyrinogen-III from 5-aminolevulinate: step 2/4. Tetrapolymerization of the monopyrrole PBG into the hydroxymethylbilane pre-uroporphyrinogen in several discrete steps. This Psychromonas ingrahamii (strain DSM 17664 / CCUG 51855 / 37) protein is Porphobilinogen deaminase.